The sequence spans 200 residues: Small ribosomal subunit protein mS26 (200 aa).

A mitochondrion-targeting transit peptide spans 1–27 (MLRALNRLAARPGGQPPTLLLLPVRGR). Lysine 159 is modified (N6-acetyllysine).

It belongs to the mitochondrion-specific ribosomal protein mS26 family. In terms of assembly, component of the mitochondrial ribosome small subunit (28S) which comprises a 12S rRNA and about 30 distinct proteins.

It is found in the mitochondrion. This is Small ribosomal subunit protein mS26 (Mrps26) from Rattus norvegicus (Rat).